The primary structure comprises 823 residues: DNA ligase (823 aa).

Residues 32–36 (DAEYD), 81–82 (SL), and glutamate 121 contribute to the NAD(+) site. Lysine 123 (N6-AMP-lysine intermediate) is an active-site residue. Residues arginine 144, glutamate 181, lysine 299, and lysine 323 each contribute to the NAD(+) site. 4 residues coordinate Zn(2+): cysteine 449, cysteine 452, cysteine 467, and cysteine 473. The disordered stretch occupies residues 528–558 (ETADKGSSENENGDAETVSGDLSKYNTQNGK). The BRCT domain maps to 746–823 (GINKAVAGKT…SEAELLTLLC (78 aa)).

The protein belongs to the NAD-dependent DNA ligase family. LigA subfamily. The cofactor is Mg(2+). It depends on Mn(2+) as a cofactor.

It catalyses the reaction NAD(+) + (deoxyribonucleotide)n-3'-hydroxyl + 5'-phospho-(deoxyribonucleotide)m = (deoxyribonucleotide)n+m + AMP + beta-nicotinamide D-nucleotide.. Functionally, DNA ligase that catalyzes the formation of phosphodiester linkages between 5'-phosphoryl and 3'-hydroxyl groups in double-stranded DNA using NAD as a coenzyme and as the energy source for the reaction. It is essential for DNA replication and repair of damaged DNA. The protein is DNA ligase of Neisseria gonorrhoeae (strain NCCP11945).